Consider the following 449-residue polypeptide: UDP-N-acetylmuramoylalanine--D-glutamate ligase (449 aa).

Residue 118–124 (GSNGKTT) coordinates ATP.

It belongs to the MurCDEF family.

The protein resides in the cytoplasm. The catalysed reaction is UDP-N-acetyl-alpha-D-muramoyl-L-alanine + D-glutamate + ATP = UDP-N-acetyl-alpha-D-muramoyl-L-alanyl-D-glutamate + ADP + phosphate + H(+). The protein operates within cell wall biogenesis; peptidoglycan biosynthesis. In terms of biological role, cell wall formation. Catalyzes the addition of glutamate to the nucleotide precursor UDP-N-acetylmuramoyl-L-alanine (UMA). This chain is UDP-N-acetylmuramoylalanine--D-glutamate ligase, found in Leuconostoc mesenteroides subsp. mesenteroides (strain ATCC 8293 / DSM 20343 / BCRC 11652 / CCM 1803 / JCM 6124 / NCDO 523 / NBRC 100496 / NCIMB 8023 / NCTC 12954 / NRRL B-1118 / 37Y).